Reading from the N-terminus, the 33-residue chain is Photosystem II reaction center protein Psb30 (33 aa).

A helical membrane pass occupies residues 5 to 25 (LIGQLVTVALVVGAGPIIIGA).

It belongs to the Psb30/Ycf12 family. In terms of assembly, PSII is composed of 1 copy each of membrane proteins PsbA, PsbB, PsbC, PsbD, PsbE, PsbF, PsbH, PsbI, PsbJ, PsbK, PsbL, PsbM, PsbT, PsbX, PsbY, PsbZ, Psb30/Ycf12, peripheral proteins of the oxygen-evolving complex and a large number of cofactors. It forms dimeric complexes.

It localises to the plastid. The protein localises to the chloroplast thylakoid membrane. Its function is as follows. A core subunit of photosystem II (PSII), probably helps stabilize the reaction center. The polypeptide is Photosystem II reaction center protein Psb30 (Ostreococcus tauri).